Consider the following 169-residue polypeptide: UPF0303 protein BOV_1367 (169 aa).

Belongs to the UPF0303 family.

This is UPF0303 protein BOV_1367 from Brucella ovis (strain ATCC 25840 / 63/290 / NCTC 10512).